The following is a 795-amino-acid chain: Protein Jade-3 (795 aa).

A compositionally biased stretch (low complexity) spans 1–25; that stretch reads MKRLRTPSSSDSSDNESPSTSFSSN. A disordered region spans residues 1 to 41; it reads MKRLRTPSSSDSSDNESPSTSFSSNKYGSKPGTPASAQKKP. The PHD-type 1 zinc-finger motif lies at 201–251; sequence DVICDVCRSPDSEEGNDMVFCDKCNICVHQACYGIVKVPDGNWLCRTCVLG. The C2HC pre-PHD-type zinc finger occupies 253 to 287; the sequence is TPQCLLCPKTGGAMKATRAGTKWAHVSCALWIPEV. The PHD-type 2 zinc-finger motif lies at 311–367; it reads LICSLCKLKTGACIQCSVKNCTIPFHVTCAFEHSLEMKTILDEGDEVKFKSYCLKHS. Disordered stretches follow at residues 630-654, 667-687, and 714-795; these read HGQSSNGKTKNEAEKSRQIKSNGIL, AASEKDPRSEISGKSQSSGFH, and FEKN…SVQR. Composition is skewed to polar residues over residues 678-687 and 720-732; these read SGKSQSSGFH and KSSGFSKPLSTER.

It belongs to the JADE family. As to quaternary structure, component of the HBO1 complex.

Its function is as follows. Scaffold subunit of some HBO1 complexes, which have a histone H4 acetyltransferase activity. This chain is Protein Jade-3 (jade3), found in Danio rerio (Zebrafish).